Consider the following 422-residue polypeptide: Tyrosine--tRNA ligase (422 aa).

Tyrosine 36 is an L-tyrosine binding site. A 'HIGH' region motif is present at residues 41 to 50 (PTAGSLHIGH). Residues tyrosine 174 and glutamine 178 each coordinate L-tyrosine. The short motif at 234–238 (KFGKT) is the 'KMSKS' region element. Lysine 237 contributes to the ATP binding site. Residues 356-420 (TDLVTLLVES…GKKQYRLVTW (65 aa)) form the S4 RNA-binding domain.

Belongs to the class-I aminoacyl-tRNA synthetase family. TyrS type 1 subfamily. Homodimer.

The protein localises to the cytoplasm. It carries out the reaction tRNA(Tyr) + L-tyrosine + ATP = L-tyrosyl-tRNA(Tyr) + AMP + diphosphate + H(+). Catalyzes the attachment of tyrosine to tRNA(Tyr) in a two-step reaction: tyrosine is first activated by ATP to form Tyr-AMP and then transferred to the acceptor end of tRNA(Tyr). The chain is Tyrosine--tRNA ligase from Aeromonas hydrophila subsp. hydrophila (strain ATCC 7966 / DSM 30187 / BCRC 13018 / CCUG 14551 / JCM 1027 / KCTC 2358 / NCIMB 9240 / NCTC 8049).